The primary structure comprises 303 residues: Small ribosomal subunit protein bS1m (303 aa).

Serine 2 carries the post-translational modification N-acetylserine. The N-terminal 12 residues, 2–13 (SFAQILRGSRAM), are a transit peptide targeting the mitochondrion; not cleaved.

Belongs to the bacterial ribosomal protein bS1 family. In terms of assembly, component of the mitochondrial small ribosomal subunit (mt-SSU). Mature yeast 74S mitochondrial ribosomes consist of a small (37S) and a large (54S) subunit. The 37S small subunit contains a 15S ribosomal RNA (15S mt-rRNA) and at least 32 different proteins. The 54S large subunit contains a 21S rRNA (21S mt-rRNA) and at least 45 different proteins. This subunit is mutually exclusive with mug178/small ribosomal subunit protein L51-b.

It localises to the mitochondrion. Functionally, component of the mitochondrial ribosome (mitoribosome), a dedicated translation machinery responsible for the synthesis of mitochondrial genome-encoded proteins, including at least some of the essential transmembrane subunits of the mitochondrial respiratory chain. The mitoribosomes are attached to the mitochondrial inner membrane and translation products are cotranslationally integrated into the membrane. bS1m functionally interacts with the 5'-UTR of mitochondrial mRNAs. Plays an essential role in mitochondrial translation. The protein is Small ribosomal subunit protein bS1m (mrp51) of Schizosaccharomyces pombe (strain 972 / ATCC 24843) (Fission yeast).